A 722-amino-acid chain; its full sequence is G2-specific protein kinase fin1 (722 aa).

Residues Tyr-4–Leu-281 form the Protein kinase domain. ATP-binding positions include Ile-10–Ile-18 and Lys-33. Catalysis depends on Asp-151, which acts as the Proton acceptor. The segment at Leu-528 to Lys-557 is disordered. A compositionally biased stretch (polar residues) spans Thr-535–Pro-546.

The protein belongs to the protein kinase superfamily. Ser/Thr protein kinase family. NIMA subfamily.

It is found in the cytoplasm. The protein resides in the cytoskeleton. Its subcellular location is the microtubule organizing center. The protein localises to the spindle pole body. The catalysed reaction is L-seryl-[protein] + ATP = O-phospho-L-seryl-[protein] + ADP + H(+). It catalyses the reaction L-threonyl-[protein] + ATP = O-phospho-L-threonyl-[protein] + ADP + H(+). Promotes chromosome condensation and nuclear envelope dynamics during mitosis. Activity appears at metaphase-anaphase transition. In Schizosaccharomyces pombe (strain 972 / ATCC 24843) (Fission yeast), this protein is G2-specific protein kinase fin1 (fin1).